The chain runs to 69 residues: uncharacterized protein (69 aa).

This is an uncharacterized protein from Vaccinia virus (strain Copenhagen) (VACV).